A 466-amino-acid polypeptide reads, in one-letter code: Coagulation factor VII (466 aa).

The N-terminal stretch at Met-1–Ala-20 is a signal peptide. A propeptide spanning residues Ala-21–Arg-60 is cleaved from the precursor. The Gla domain occupies Ala-61–Ser-105. 10 positions are modified to 4-carboxyglutamate: Glu-66, Glu-67, Glu-74, Glu-76, Glu-79, Glu-80, Glu-85, Glu-86, Glu-89, and Glu-95. A disulfide bridge links Cys-77 with Cys-82. Residues Asp-106 to Glu-142 form the EGF-like 1; calcium-binding domain. Intrachain disulfides connect Cys-110–Cys-121, Cys-115–Cys-130, Cys-132–Cys-141, Cys-151–Cys-162, Cys-158–Cys-172, Cys-174–Cys-187, Cys-195–Cys-322, Cys-219–Cys-224, Cys-238–Cys-254, and Cys-370–Cys-389. O-linked (Glc...) serine; alternate glycosylation occurs at Ser-112. Ser-112 carries O-linked (Xyl...) serine; alternate glycosylation. Ser-120 is a glycosylation site (O-linked (Fuc) serine). Asp-123 is subject to (3R)-3-hydroxyaspartate. The region spanning Asp-147–Thr-188 is the EGF-like 2 domain. An N-linked (GlcNAc...) asparagine glycan is attached at Asn-205. Residues Ile-213 to Arg-452 form the Peptidase S1 domain. Active-site charge relay system residues include His-253 and Asp-302. The N-linked (GlcNAc...) asparagine glycan is linked to Asn-382. Asp-398 is a binding site for substrate. The cysteines at positions 400 and 428 are disulfide-linked. Ser-404 serves as the catalytic Charge relay system.

It belongs to the peptidase S1 family. As to quaternary structure, heterodimer of a light chain and a heavy chain linked by a disulfide bond. Post-translationally, the vitamin K-dependent, enzymatic carboxylation of some glutamate residues allows the modified protein to bind calcium. The iron and 2-oxoglutarate dependent 3-hydroxylation of aspartate and asparagine is (R) stereospecific within EGF domains. In terms of processing, O-glycosylated. O-fucosylated by POFUT1 on a conserved serine or threonine residue found in the consensus sequence C2-X(4,5)-[S/T]-C3 of EGF domains, where C2 and C3 are the second and third conserved cysteines. Post-translationally, can be either O-glucosylated or O-xylosylated at Ser-112 by POGLUT1.

It is found in the secreted. The enzyme catalyses Selective cleavage of Arg-|-Ile bond in factor X to form factor Xa.. Its function is as follows. Initiates the extrinsic pathway of blood coagulation. Serine protease that circulates in the blood in a zymogen form. Factor VII is converted to factor VIIa by factor Xa, factor XIIa, factor IXa, or thrombin by minor proteolysis. In the presence of tissue factor and calcium ions, factor VIIa then converts factor X to factor Xa by limited proteolysis. Factor VIIa also converts factor IX to factor IXa in the presence of tissue factor and calcium. This chain is Coagulation factor VII (F7), found in Pan troglodytes (Chimpanzee).